The sequence spans 152 residues: Acidic phospholipase A2 1 (152 aa).

The first 19 residues, 1–19, serve as a signal peptide directing secretion; the sequence is MNPAYFLVLAAVCVSLLGA. A propeptide spanning residues 20 to 27 is cleaved from the precursor; sequence ANIPPQPL. 7 disulfide bridges follow: Cys38–Cys104, Cys54–Cys151, Cys56–Cys72, Cys71–Cys132, Cys78–Cys125, Cys88–Cys118, and Cys111–Cys123. The Ca(2+) site is built by Tyr55, Gly57, and Gly59. The active site involves His75. Residue Asp76 participates in Ca(2+) binding. Residue Asp126 is part of the active site.

Belongs to the phospholipase A2 family. Group I subfamily. D49 sub-subfamily. It depends on Ca(2+) as a cofactor. As to expression, expressed by the venom gland.

It is found in the secreted. It catalyses the reaction a 1,2-diacyl-sn-glycero-3-phosphocholine + H2O = a 1-acyl-sn-glycero-3-phosphocholine + a fatty acid + H(+). In terms of biological role, PLA2 catalyzes the calcium-dependent hydrolysis of the 2-acyl groups in 3-sn-phosphoglycerides. The polypeptide is Acidic phospholipase A2 1 (Bungarus candidus (Malayan krait)).